Here is a 248-residue protein sequence, read N- to C-terminus: Small ribosomal subunit protein uS3 (248 aa).

The region spanning 38–106 (IREYLEKGLD…MVALNILEVK (69 aa)) is the KH type-2 domain. The disordered stretch occupies residues 214-248 (SELNAPAQGRGRGDRNGRPRRGGQRRQRAQQKQEG). Residues 231–242 (RPRRGGQRRQRA) show a composition bias toward basic residues.

Belongs to the universal ribosomal protein uS3 family. Part of the 30S ribosomal subunit. Forms a tight complex with proteins S10 and S14.

In terms of biological role, binds the lower part of the 30S subunit head. Binds mRNA in the 70S ribosome, positioning it for translation. In Corynebacterium aurimucosum (strain ATCC 700975 / DSM 44827 / CIP 107346 / CN-1) (Corynebacterium nigricans), this protein is Small ribosomal subunit protein uS3.